The chain runs to 451 residues: Exodeoxyribonuclease 7 large subunit (451 aa).

This sequence belongs to the XseA family. As to quaternary structure, heterooligomer composed of large and small subunits.

The protein localises to the cytoplasm. It catalyses the reaction Exonucleolytic cleavage in either 5'- to 3'- or 3'- to 5'-direction to yield nucleoside 5'-phosphates.. Functionally, bidirectionally degrades single-stranded DNA into large acid-insoluble oligonucleotides, which are then degraded further into small acid-soluble oligonucleotides. This Thiobacillus denitrificans (strain ATCC 25259 / T1) protein is Exodeoxyribonuclease 7 large subunit.